The primary structure comprises 447 residues: ATP-dependent protease ATPase subunit HslU (447 aa).

ATP is bound by residues Ile17 and 59–64 (GVGKTE). Positions 136-160 (PPARGGFQGEPTAEEKPTEKKESAT) are disordered. The segment covering 148 to 159 (AEEKPTEKKESA) has biased composition (basic and acidic residues). 3 residues coordinate ATP: Asp260, Glu325, and Arg397.

The protein belongs to the ClpX chaperone family. HslU subfamily. A double ring-shaped homohexamer of HslV is capped on each side by a ring-shaped HslU homohexamer. The assembly of the HslU/HslV complex is dependent on binding of ATP.

The protein localises to the cytoplasm. In terms of biological role, ATPase subunit of a proteasome-like degradation complex; this subunit has chaperone activity. The binding of ATP and its subsequent hydrolysis by HslU are essential for unfolding of protein substrates subsequently hydrolyzed by HslV. HslU recognizes the N-terminal part of its protein substrates and unfolds these before they are guided to HslV for hydrolysis. The protein is ATP-dependent protease ATPase subunit HslU of Coxiella burnetii (strain Dugway 5J108-111).